The sequence spans 113 residues: Mediator of RNA polymerase II transcription subunit 11 (113 aa).

Belongs to the Mediator complex subunit 11 family. Component of the Mediator complex.

It is found in the nucleus. Component of the Mediator complex, a coactivator involved in the regulated transcription of nearly all RNA polymerase II-dependent genes. Mediator functions as a bridge to convey information from gene-specific regulatory proteins to the basal RNA polymerase II transcription machinery. Mediator is recruited to promoters by direct interactions with regulatory proteins and serves as a scaffold for the assembly of a functional pre-initiation complex with RNA polymerase II and the general transcription factors. This chain is Mediator of RNA polymerase II transcription subunit 11 (MED11), found in Eremothecium gossypii (strain ATCC 10895 / CBS 109.51 / FGSC 9923 / NRRL Y-1056) (Yeast).